A 127-amino-acid chain; its full sequence is Unclassified hydrophobin 5 (127 aa).

The N-terminal stretch at 1–24 (MFNKQTNAIVLLFTFALFATLAVA) is a signal peptide. Disulfide bonds link Cys-39-Cys-107, Cys-46-Cys-101, Cys-47-Cys-92, and Cys-108-Cys-121.

It belongs to the fungal hydrophobin family. In terms of assembly, self-assembles to form functional amyloid fibrils called rodlets. Self-assembly into fibrillar rodlets occurs spontaneously at hydrophobic:hydrophilic interfaces and the rodlets further associate laterally to form amphipathic monolayers.

It is found in the secreted. Its subcellular location is the cell wall. Functionally, aerial growth, conidiation, and dispersal of filamentous fungi in the environment rely upon a capability of their secreting small amphipathic proteins called hydrophobins (HPBs) with low sequence identity. Class I can self-assemble into an outermost layer of rodlet bundles on aerial cell surfaces, conferring cellular hydrophobicity that supports fungal growth, development and dispersal; whereas Class II form highly ordered films at water-air interfaces through intermolecular interactions but contribute nothing to the rodlet structure. In Pleurotus ostreatus (strain PC15) (Oyster mushroom), this protein is Unclassified hydrophobin 5.